We begin with the raw amino-acid sequence, 173 residues long: SPbeta prophage-derived putative HNH homing endonuclease YosQ (173 aa).

Functionally, a possible homing endonuclease, it is entirely encoded within the YosP intron. The protein is SPbeta prophage-derived putative HNH homing endonuclease YosQ (yosQ) of Bacillus subtilis (strain 168).